The chain runs to 348 residues: D-alanine--D-alanine ligase (348 aa).

The region spanning lysine 132–methionine 334 is the ATP-grasp domain. Leucine 162–glutamate 217 lines the ATP pocket. 3 residues coordinate Mg(2+): aspartate 288, glutamate 301, and asparagine 303.

This sequence belongs to the D-alanine--D-alanine ligase family. The cofactor is Mg(2+). It depends on Mn(2+) as a cofactor.

The protein resides in the cytoplasm. It carries out the reaction 2 D-alanine + ATP = D-alanyl-D-alanine + ADP + phosphate + H(+). It functions in the pathway cell wall biogenesis; peptidoglycan biosynthesis. Cell wall formation. This is D-alanine--D-alanine ligase from Streptococcus agalactiae serotype Ia (strain ATCC 27591 / A909 / CDC SS700).